The following is a 230-amino-acid chain: Protein FAM3A (230 aa).

An N-terminal signal peptide occupies residues 1–33 (MRLAGPLRIVVLVVSVGVTWIVVSILLGGPGSG). Intrachain disulfides connect Cys59–Cys87 and Cys65–Cys222. Residues 68 to 226 (EHLAFRVVSG…LEMEGCIPRR (159 aa)) form the GG-type lectin domain.

Belongs to the FAM3 family. In terms of tissue distribution, in similar amounts in testis, pancreas, adrenal, placenta, brain, fetal brain, liver, kidney, skeletal muscle and heart.

It is found in the secreted. Its function is as follows. May act as a defensin against invading fungal microorganisms. In Homo sapiens (Human), this protein is Protein FAM3A (FAM3A).